We begin with the raw amino-acid sequence, 1002 residues long: Golgin subfamily A member 2 (1002 aa).

The span at 1 to 11 (MWPQPRLPPRP) shows a compositional bias: pro residues. The interval 1–84 (MWPQPRLPPR…AATLQPSDDT (84 aa)) is interaction with p115/USO1. The segment at 1-107 (MWPQPRLPPR…TSMAASQNHD (107 aa)) is disordered. A coiled-coil region spans residues 16-892 (ETRQSKLAAA…LELQELVLRL (877 aa)). Dimethylated arginine occurs at positions 18, 30, and 35. Residues 26-49 (KKKLREYQQRNSPGVPTGAKKKKK) carry the Nuclear localization signal motif. Position 37 is a phosphoserine (Ser-37). Over residues 52 to 63 (NGSNPETTTSGG) the composition is skewed to polar residues. At Ser-66 the chain carries Phosphoserine. Residues 95-105 (ASLTSMAASQN) show a composition bias toward polar residues. Residues Ser-273, Ser-438, and Ser-690 each carry the phosphoserine modification. The segment at 694–724 (HPGEGDGLDREEEEDEEEEEEEAVAVPQPMP) is disordered. Over residues 702-716 (DREEEEDEEEEEEEA) the composition is skewed to acidic residues. Phosphoserine occurs at positions 937, 953, and 981. The interval 992-1002 (DENDEVKITVI) is interaction with GORASP1/GRASP65.

The protein belongs to the GOLGA2 family. In terms of assembly, homodimer, may assemble into homohexamers. Homotetramer; forms a parallel homotetramer with a flexible rod-like structure that can give rise to I- and Y-shaped conformations. Interacts with GORASP1/GRASP65. The homooligomer forms a complex with GORASP1 with a 1:1 stoichiometry. Interacts with RAB1B that has been activated by GTP-binding. Interacts with p115/USO1; interaction with p115/USO1 inhibits interaction with STX5 and/or RAB1B. Interacts with STX5. Interacts with ZFPL1. Interacts with AKAP450/AKAP9; leading to recruit AKAP450/AKAP9 to the cis-Golgi. Cleaved by caspases at the onset of apoptosis. Post-translationally, methylation by PRMT5 is required for Golgi ribbon formation. While dimethylation at Arg-30 and Arg-35 are confirmed in vivo, it is unclear whether Arg-18 is methylated in vivo. In terms of processing, phosphorylated at Ser-37 by CDK1 at the onset of mitosis, inhibiting the interaction with p115/USO1 and triggering Golgi disassembly. Phosphorylated at Ser-37 in prophase as the Golgi complex starts to break down, and remains phosphorylated during further breakdown and partitioning of the Golgi fragments in metaphase and anaphase. In telophase, GM130 is dephosphorylated by PP2A as the Golgi fragments start to reassemble.

It is found in the golgi apparatus. It localises to the cis-Golgi network membrane. The protein localises to the endoplasmic reticulum-Golgi intermediate compartment membrane. Its subcellular location is the cytoplasm. The protein resides in the cytoskeleton. It is found in the spindle pole. Its function is as follows. Peripheral membrane component of the cis-Golgi stack that acts as a membrane skeleton that maintains the structure of the Golgi apparatus, and as a vesicle thether that facilitates vesicle fusion to the Golgi membrane. Required for normal protein transport from the endoplasmic reticulum to the Golgi apparatus and the cell membrane. Together with p115/USO1 and STX5, involved in vesicle tethering and fusion at the cis-Golgi membrane to maintain the stacked and inter-connected structure of the Golgi apparatus. Plays a central role in mitotic Golgi disassembly: phosphorylation at Ser-37 by CDK1 at the onset of mitosis inhibits the interaction with p115/USO1, preventing tethering of COPI vesicles and thereby inhibiting transport through the Golgi apparatus during mitosis. Also plays a key role in spindle pole assembly and centrosome organization. Promotes the mitotic spindle pole assembly by activating the spindle assembly factor TPX2 to nucleate microtubules around the Golgi and capture them to couple mitotic membranes to the spindle: upon phosphorylation at the onset of mitosis, GOLGA2 interacts with importin-alpha via the nuclear localization signal region, leading to recruit importin-alpha to the Golgi membranes and liberate the spindle assembly factor TPX2 from importin-alpha. TPX2 then activates AURKA kinase and stimulates local microtubule nucleation. Upon filament assembly, nascent microtubules are further captured by GOLGA2, thus linking Golgi membranes to the spindle. Regulates the meiotic spindle pole assembly, probably via the same mechanism. Also regulates the centrosome organization. Also required for the Golgi ribbon formation and glycosylation of membrane and secretory proteins. The protein is Golgin subfamily A member 2 (GOLGA2) of Homo sapiens (Human).